The following is a 612-amino-acid chain: GPI mannosyltransferase 3 (612 aa).

The next 2 helical transmembrane spans lie at 92–112 (LLAIASKEALSIICSIGAGLM) and 145–165 (VIYAPKLFMALLAATGEYFTI). A glycan (N-linked (GlcNAc...) asparagine) is linked at asparagine 188. 3 helical membrane-spanning segments follow: residues 192 to 212 (IALLLTLTNFFNCFFITRTFI), 254 to 274 (RPSNAIIWIVLGFFLTINLLL), and 288 to 308 (ILVVFTITMLVNVVIDFYFYN). N-linked (GlcNAc...) asparagine glycosylation occurs at asparagine 321. A helical membrane pass occupies residues 339 to 359 (LLQSLPIMLGYSLPLFIYGLF). Asparagine 361 carries N-linked (GlcNAc...) asparagine glycosylation. 3 helical membrane passes run 371 to 391 (FGALRQIKFVLILNIIFYSYL), 398 to 418 (FIYPLQPLFCLLSALGALKLA), and 429 to 449 (EYVWIIPLMSMIVSIFITTFQ). N-linked (GlcNAc...) asparagine glycosylation is found at asparagine 508, asparagine 526, and asparagine 550.

It belongs to the glycosyltransferase 22 family. PIGB subfamily.

Its subcellular location is the endoplasmic reticulum membrane. It functions in the pathway glycolipid biosynthesis; glycosylphosphatidylinositol-anchor biosynthesis. Mannosyltransferase involved in glycosylphosphatidylinositol-anchor biosynthesis. Transfers the third mannose to Man2-GlcN-acyl-PI during GPI precursor assembly. This is GPI mannosyltransferase 3 (GPI10) from Candida glabrata (strain ATCC 2001 / BCRC 20586 / JCM 3761 / NBRC 0622 / NRRL Y-65 / CBS 138) (Yeast).